Here is a 407-residue protein sequence, read N- to C-terminus: MRQLLPGNTVWRNIRLATMDPQRQAPYGLVDNQALIVREGHICDIVPETQLPVSGDNIHDMQGRLVTPGLIDCHTHLVFAGNRAAEWEQRLNGASYQHISAQGGGINATVSATRACAEETLYLLARERMMRLASEGVTLLEIKSGYGLELATEEKLLRVAAKLAAENAIDISPTLLAAHATPAEYRDDPDGYITLVCETMIPQLWQKGLFDAVDLFCESVGFNVAQSERVLQTAKALGIPVKGHVEQLSLLGGAQLVSRYQGLSADHIEYLDEAGVAAMRDGGTVGVLLPGAFYFLRETQRPPVELLRRYQVPVAVASDFNPGTSPFCSLHLAMNMACVQFGLTPEEAWAGVTRHAARALGRQATHGQLRAGYRADFVVWDAEQPVEIVYEPGRNPLYQRVYRGQIS.

Residues His-74 and His-76 each coordinate Fe(3+). His-74 and His-76 together coordinate Zn(2+). Residues Arg-83, Tyr-146, and His-179 each coordinate 4-imidazolone-5-propanoate. Tyr-146 is a binding site for N-formimidoyl-L-glutamate. His-244 is a binding site for Fe(3+). His-244 serves as a coordination point for Zn(2+). Gln-247 contacts 4-imidazolone-5-propanoate. Asp-319 serves as a coordination point for Fe(3+). Asp-319 is a Zn(2+) binding site. N-formimidoyl-L-glutamate is bound by residues Asn-321 and Gly-323. Thr-324 is a binding site for 4-imidazolone-5-propanoate.

It belongs to the metallo-dependent hydrolases superfamily. HutI family. It depends on Zn(2+) as a cofactor. Fe(3+) is required as a cofactor.

Its subcellular location is the cytoplasm. It carries out the reaction 4-imidazolone-5-propanoate + H2O = N-formimidoyl-L-glutamate. It participates in amino-acid degradation; L-histidine degradation into L-glutamate; N-formimidoyl-L-glutamate from L-histidine: step 3/3. Catalyzes the hydrolytic cleavage of the carbon-nitrogen bond in imidazolone-5-propanoate to yield N-formimidoyl-L-glutamate. It is the third step in the universal histidine degradation pathway. The sequence is that of Imidazolonepropionase from Salmonella paratyphi C (strain RKS4594).